Consider the following 179-residue polypeptide: Replication restart protein DnaT (179 aa).

The tract at residues 156-179 (GGLPKRDVNTVSEPDSQIPPGFRG) is disordered.

Belongs to the DnaT family. As to quaternary structure, homooligomerizes. Interacts with PriB. Component of the replication restart primosome. Primosome assembly occurs via a 'hand-off' mechanism. PriA binds to replication forks, subsequently PriB then DnaT bind; DnaT then displaces ssDNA to generate the helicase loading substrate.

In terms of biological role, involved in the restart of stalled replication forks, which reloads the replicative helicase on sites other than the origin of replication. Can function in multiple replication restart pathways. Displaces ssDNA from a PriB-ssDNA complex. Probably forms a spiral filament on ssDNA. The chain is Replication restart protein DnaT from Escherichia coli O1:K1 / APEC.